We begin with the raw amino-acid sequence, 101 residues long: Small ribosomal subunit protein uS14 (101 aa).

Residues 36-72 (GTDESREAARAGIQRLPRDASPIRVRNRDGIDGRPRG) are disordered. A compositionally biased stretch (basic and acidic residues) spans 61–70 (RNRDGIDGRP).

It belongs to the universal ribosomal protein uS14 family. As to quaternary structure, part of the 30S ribosomal subunit. Contacts proteins S3 and S10.

In terms of biological role, binds 16S rRNA, required for the assembly of 30S particles and may also be responsible for determining the conformation of the 16S rRNA at the A site. The sequence is that of Small ribosomal subunit protein uS14 from Clavibacter michiganensis subsp. michiganensis (strain NCPPB 382).